Consider the following 200-residue polypeptide: Small ribosomal subunit protein uS4 (200 aa).

Residues 22–42 are disordered; that stretch reads TGKELEKRPYAPGPHGPNQRK. The 61-residue stretch at 92 to 152 folds into the S4 RNA-binding domain; that stretch reads ARLDNLVYRM…EKSNNLVVVK (61 aa).

Belongs to the universal ribosomal protein uS4 family. Part of the 30S ribosomal subunit. Contacts protein S5. The interaction surface between S4 and S5 is involved in control of translational fidelity.

Functionally, one of the primary rRNA binding proteins, it binds directly to 16S rRNA where it nucleates assembly of the body of the 30S subunit. With S5 and S12 plays an important role in translational accuracy. The polypeptide is Small ribosomal subunit protein uS4 (Bacillus thuringiensis subsp. konkukian (strain 97-27)).